A 173-amino-acid chain; its full sequence is Small ribosomal subunit protein uS5 (173 aa).

In terms of domain architecture, S5 DRBM spans 18 to 81; sequence YVEKLVKLNR…EKAKANMVTF (64 aa).

This sequence belongs to the universal ribosomal protein uS5 family. As to quaternary structure, part of the 30S ribosomal subunit. Contacts proteins S4 and S8.

Functionally, with S4 and S12 plays an important role in translational accuracy. Located at the back of the 30S subunit body where it stabilizes the conformation of the head with respect to the body. This is Small ribosomal subunit protein uS5 from Treponema denticola (strain ATCC 35405 / DSM 14222 / CIP 103919 / JCM 8153 / KCTC 15104).